Reading from the N-terminus, the 183-residue chain is Potassium-transporting ATPase KdpC subunit (183 aa).

The helical transmembrane segment at 10 to 30 (LTVFTLILFAVIYPLAIYGIA) threads the bilayer.

Belongs to the KdpC family. As to quaternary structure, the system is composed of three essential subunits: KdpA, KdpB and KdpC.

It is found in the cell inner membrane. In terms of biological role, part of the high-affinity ATP-driven potassium transport (or Kdp) system, which catalyzes the hydrolysis of ATP coupled with the electrogenic transport of potassium into the cytoplasm. This subunit acts as a catalytic chaperone that increases the ATP-binding affinity of the ATP-hydrolyzing subunit KdpB by the formation of a transient KdpB/KdpC/ATP ternary complex. In Flavobacterium johnsoniae (strain ATCC 17061 / DSM 2064 / JCM 8514 / BCRC 14874 / CCUG 350202 / NBRC 14942 / NCIMB 11054 / UW101) (Cytophaga johnsonae), this protein is Potassium-transporting ATPase KdpC subunit.